We begin with the raw amino-acid sequence, 304 residues long: Cell surface-binding protein OPG105 (304 aa).

One can recognise an Alpha-carbonic anhydrase domain in the interval 1-235 (MPQQLSPINI…NDDTQVYYSG (235 aa)). The Virion surface portion of the chain corresponds to 1-275 (MPQQLSPINI…YQKYIEGNKT (275 aa)). Residues 276-294 (FAIIAIVFVFILTAILFFM) traverse the membrane as a helical segment. Topologically, residues 295–304 (SQRYSREKQN) are intravirion.

This sequence belongs to the alpha-carbonic anhydrase family. Homodimer; disulfide-linked. Apparently non-glycosylated.

The protein resides in the virion membrane. Its function is as follows. Binds to chondroitin sulfate on the cell surface to provide virion attachment to target cell. This chain is Cell surface-binding protein OPG105 (OPG105), found in Vaccinia virus (strain Ankara) (VACV).